The primary structure comprises 842 residues: MVTVGNYCEAEGPLGPAWAQNGLSPCFFFTLVPSTLMALGALALVLVLPCRRRDVPSGTEELFWAADSRVAPYALQLFLATLQVALPLAGLAGRVGTARGVRLPGYLLLASMLGSLASACGLWLLVAERRQARQSLAMGVWMKFRHSSGLLLLWTVAFAAENLALVSWNSPQWWWARADLGQQVQFGLWVLRYVISGGLFILGLWAPGLRPQSYTLRVHEADQDVERNQAQSTDRTSTWRDLGRKLRLLSSYLWPRGSPALQFIVLICLGLMGLDRALNVLVPIFYRDIVNLLTSKAPWSSLAWTVTTYVFLKFLQGGGTGSTGFVSNLRTFLWIRVQQFTSRGVELRLFSHLHELSLRWHLGRRTGEVLRVVDRGTSSVTGLLSYLVFNIIPTLADIIIGIIYFSMFFNAWFGLIVFLCMSLYLFLTIVVTEWRAKFRRAMNTQENITRARAVDSLLNFETVKYYNAEGYEVERYREAIIKYQGLEWKSSASLVVLNQTQNLVIGLGLLAGSLLCAYFVSEQKLQVGDFVLFGTYITQLYMPLNWFGTYYRMIQTNFIDMENMFDLLKEETEVKDVPGAGPLRFHKGQIEFENVHFSYADGRETLQDVSFTVMPGQTVALVGPSGAGKSTILRLLFRFYDISSGCIRIDGQDISQVTQISLRSHIGVVPQDTVLFNDTIANNIRYGRIAAGDSEVEAAAQAAGIHDAILSFPEGYETQVGERGLKLSGGEKQRVAIARTILKAPDIILLDEATSALDTSNERAIQASLAKVCTNRTTIVVAHRLSTVVSADQILVIKDGCIIERGRHEALLSQGGVYAEMWQLQQKGQETVSEDSKPQDIA.

Residues 1-26 (MVTVGNYCEAEGPLGPAWAQNGLSPC) lie on the Lumenal side of the membrane. Residues 1 to 205 (MVTVGNYCEA…SGGLFILGLW (205 aa)) form a required for the lysosomal targeting region. Residues 1–236 (MVTVGNYCEA…RNQAQSTDRT (236 aa)) are required for ATPase activity. A disulfide bridge connects residues Cys-8 and Cys-26. Residues 27–47 (FFFTLVPSTLMALGALALVLV) form a helical membrane-spanning segment. Residues 48-72 (LPCRRRDVPSGTEELFWAADSRVAP) are Cytoplasmic-facing. A helical transmembrane segment spans residues 73-93 (YALQLFLATLQVALPLAGLAG). The Lumenal segment spans residues 94–106 (RVGTARGVRLPGY). The chain crosses the membrane as a helical span at residues 107–127 (LLLASMLGSLASACGLWLLVA). Topologically, residues 128–147 (ERRQARQSLAMGVWMKFRHS) are cytoplasmic. A helical membrane pass occupies residues 148–168 (SGLLLLWTVAFAAENLALVSW). At 169–185 (NSPQWWWARADLGQQVQ) the chain is on the lumenal side. Residues 186-206 (FGLWVLRYVISGGLFILGLWA) form a helical membrane-spanning segment. Residues 207–263 (PGLRPQSYTLRVHEADQDVERNQAQSTDRTSTWRDLGRKLRLLSSYLWPRGSPALQF) lie on the Cytoplasmic side of the membrane. Residues 264 to 284 (IVLICLGLMGLDRALNVLVPI) traverse the membrane as a helical segment. One can recognise an ABC transmembrane type-1 domain in the interval 265 to 556 (VLICLGLMGL…FGTYYRMIQT (292 aa)). Topologically, residues 285–305 (FYRDIVNLLTSKAPWSSLAWT) are lumenal. A helical membrane pass occupies residues 306 to 326 (VTTYVFLKFLQGGGTGSTGFV). The Cytoplasmic portion of the chain corresponds to 327–375 (SNLRTFLWIRVQQFTSRGVELRLFSHLHELSLRWHLGRRTGEVLRVVDR). Residues 376 to 396 (GTSSVTGLLSYLVFNIIPTLA) traverse the membrane as a helical segment. Position 397 (Asp-397) is a topological domain, lumenal. The chain crosses the membrane as a helical span at residues 398-418 (IIIGIIYFSMFFNAWFGLIVF). The Cytoplasmic segment spans residues 419–499 (LCMSLYLFLT…SSASLVVLNQ (81 aa)). Residues 500 to 520 (TQNLVIGLGLLAGSLLCAYFV) traverse the membrane as a helical segment. Over 521 to 529 (SEQKLQVGD) the chain is Lumenal. Residues 530-550 (FVLFGTYITQLYMPLNWFGTY) traverse the membrane as a helical segment. Topologically, residues 551-842 (YRMIQTNFID…SEDSKPQDIA (292 aa)) are cytoplasmic. Residues 590-824 (IEFENVHFSY…GGVYAEMWQL (235 aa)) enclose the ABC transporter domain. 623–630 (GPSGAGKS) provides a ligand contact to ATP.

It belongs to the ABC transporter superfamily. ABCB family. Heavy Metal importer (TC 3.A.1.210) subfamily. Homodimer. Post-translationally, N-glycosylated. In terms of tissue distribution, highly expressed in the liver, adrenal glands, and testis.

Its subcellular location is the cell membrane. It is found in the mitochondrion outer membrane. The protein resides in the endoplasmic reticulum membrane. The protein localises to the golgi apparatus membrane. It localises to the endosome membrane. Its subcellular location is the lysosome membrane. It is found in the late endosome membrane. The protein resides in the early endosome membrane. The protein localises to the secreted. It localises to the extracellular exosome. Its subcellular location is the mitochondrion. It is found in the endosome. The protein resides in the multivesicular body membrane. The protein localises to the melanosome membrane. It catalyses the reaction heme b(in) + ATP + H2O = heme b(out) + ADP + phosphate + H(+). It carries out the reaction coproporphyrin III(in) + ATP + H2O = coproporphyrin III(out) + ADP + phosphate + H(+). The enzyme catalyses pheophorbide a(in) + ATP + H2O = pheophorbide a(out) + ADP + phosphate + H(+). The catalysed reaction is coproporphyrinogen III(in) + ATP + H2O = coproporphyrinogen III(out) + ADP + phosphate + H(+). It catalyses the reaction protoporphyrin IX(in) + ATP + H2O = protoporphyrin IX(out) + ADP + phosphate + H(+). It carries out the reaction coproporphyrin I(in) + ATP + H2O = coproporphyrin I(out) + ADP + phosphate + H(+). The enzyme catalyses uroporphyrin I(in) + ATP + H2O = uroporphyrin I(out) + ADP + phosphate + H(+). The catalysed reaction is uroporphyrin III(in) + ATP + H2O = uroporphyrin III(out) + ADP + phosphate + H(+). Its function is as follows. ATP-dependent transporter that catalyzes the transport of a broad-spectrum of porphyrins from the cytoplasm to the extracellular space through the plasma membrane or into the vesicle lumen. May also function as an ATP-dependent importer of porphyrins from the cytoplasm into the mitochondria, in turn may participate in the de novo heme biosynthesis regulation and in the coordination of heme and iron homeostasis during phenylhydrazine stress. May also play a key role in the early steps of melanogenesis producing PMEL amyloid fibrils. In vitro, it confers to cells a resistance to toxic metal such as arsenic and cadmium and against chemotherapeutics agent such as 5-fluorouracil, SN-38 and vincristin. In addition may play a role in the transition metal homeostasis. The polypeptide is ATP-binding cassette sub-family B member 6 (Mesocricetus auratus (Golden hamster)).